A 395-amino-acid chain; its full sequence is Chorismate synthase (395 aa).

Residues Arg40 and Arg46 each contribute to the NADP(+) site. Residues 99–120 (PREGRNAPLSRPRPGHADLTGM) form a disordered region. FMN is bound by residues 134–136 (RSS), 256–257 (QA), Gly301, 316–320 (KPIPS), and Arg342.

It belongs to the chorismate synthase family. In terms of assembly, homotetramer. It depends on FMNH2 as a cofactor.

It carries out the reaction 5-O-(1-carboxyvinyl)-3-phosphoshikimate = chorismate + phosphate. It participates in metabolic intermediate biosynthesis; chorismate biosynthesis; chorismate from D-erythrose 4-phosphate and phosphoenolpyruvate: step 7/7. In terms of biological role, catalyzes the anti-1,4-elimination of the C-3 phosphate and the C-6 proR hydrogen from 5-enolpyruvylshikimate-3-phosphate (EPSP) to yield chorismate, which is the branch point compound that serves as the starting substrate for the three terminal pathways of aromatic amino acid biosynthesis. This reaction introduces a second double bond into the aromatic ring system. The polypeptide is Chorismate synthase (Bifidobacterium longum (strain DJO10A)).